The following is a 270-amino-acid chain: Putative pyruvate, phosphate dikinase regulatory protein 2 (270 aa).

151–158 lines the ADP pocket; sequence GVSRTSKT.

This sequence belongs to the pyruvate, phosphate/water dikinase regulatory protein family. PDRP subfamily.

The enzyme catalyses N(tele)-phospho-L-histidyl/L-threonyl-[pyruvate, phosphate dikinase] + ADP = N(tele)-phospho-L-histidyl/O-phospho-L-threonyl-[pyruvate, phosphate dikinase] + AMP + H(+). It carries out the reaction N(tele)-phospho-L-histidyl/O-phospho-L-threonyl-[pyruvate, phosphate dikinase] + phosphate + H(+) = N(tele)-phospho-L-histidyl/L-threonyl-[pyruvate, phosphate dikinase] + diphosphate. In terms of biological role, bifunctional serine/threonine kinase and phosphorylase involved in the regulation of the pyruvate, phosphate dikinase (PPDK) by catalyzing its phosphorylation/dephosphorylation. The protein is Putative pyruvate, phosphate dikinase regulatory protein 2 of Listeria monocytogenes serovar 1/2a (strain ATCC BAA-679 / EGD-e).